The sequence spans 420 residues: Histidine--tRNA ligase (420 aa).

The protein belongs to the class-II aminoacyl-tRNA synthetase family. As to quaternary structure, homodimer.

The protein resides in the cytoplasm. It carries out the reaction tRNA(His) + L-histidine + ATP = L-histidyl-tRNA(His) + AMP + diphosphate + H(+). The chain is Histidine--tRNA ligase (hisS) from Mycoplasmopsis pulmonis (strain UAB CTIP) (Mycoplasma pulmonis).